Here is an 800-residue protein sequence, read N- to C-terminus: Ent-copalyl diphosphate synthase 2, chloroplastic (800 aa).

Residues 1–47 (MQMQVLTAASSLPRATLLRPAAAEPWRQSFLQLQARPIQRPGIMLHC) constitute a chloroplast transit peptide. The tract at residues 52 to 80 (QGQETRERRQLDDDEHARPPQGGDDDVAA) is disordered. Residues 55–69 (ETRERRQLDDDEHAR) are compositionally biased toward basic and acidic residues. Lys242 provides a ligand contact to substrate. Mg(2+) contacts are provided by Asp374 and Asp376. A DXDD motif motif is present at residues 374-377 (DIDD). Lys461 contacts substrate.

This sequence belongs to the terpene synthase family. Requires Mg(2+) as cofactor.

It is found in the plastid. The protein resides in the chloroplast. It carries out the reaction (2E,6E,10E)-geranylgeranyl diphosphate = ent-copalyl diphosphate. Its pathway is secondary metabolite biosynthesis; terpenoid biosynthesis. Functionally, catalyzes the conversion of geranylgeranyl diphosphate to the phytoalexin precursor ent-copalyl diphosphate. The sequence is that of Ent-copalyl diphosphate synthase 2, chloroplastic from Oryza sativa subsp. japonica (Rice).